The primary structure comprises 177 residues: O-acetyl-ADP-ribose deacetylase (177 aa).

The Macro domain maps to 1–175 (MKSRIHVLQG…LYNRLLTQQG (175 aa)). Substrate-binding positions include 11–12 (DI), Asn25, 33–35 (GVD), and 122–126 (STGVY). Asp35 (proton acceptor) is an active-site residue.

The protein belongs to the MacroD-type family. YmdB subfamily. Homodimer. Interacts with RNase III.

It carries out the reaction 3''-O-acetyl-ADP-D-ribose + H2O = ADP-D-ribose + acetate + H(+). It catalyses the reaction 2''-O-acetyl-ADP-D-ribose + H2O = ADP-D-ribose + acetate + H(+). Deacetylates O-acetyl-ADP ribose to yield ADP-ribose and free acetate. Down-regulates ribonuclease 3 (RNase III) activity. Acts by interacting directly with the region of the ribonuclease that is required for dimerization/activation. This is O-acetyl-ADP-ribose deacetylase from Escherichia fergusonii (strain ATCC 35469 / DSM 13698 / CCUG 18766 / IAM 14443 / JCM 21226 / LMG 7866 / NBRC 102419 / NCTC 12128 / CDC 0568-73).